The chain runs to 257 residues: Membrane protein insertase YidC 1 (257 aa).

An N-terminal signal peptide occupies residues 1–20 (MYRKFGMAAMLVSILLLMTG). Cys21 carries the N-palmitoyl cysteine lipid modification. Cys21 carries S-diacylglycerol cysteine lipidation. Transmembrane regions (helical) follow at residues 35-55 (IWDS…ANAF), 59-79 (FGLA…PLMI), 129-149 (LAGC…YHAI), 160-180 (FLWF…AGIT), and 205-225 (VMIL…WVIG).

The protein belongs to the OXA1/ALB3/YidC family. Type 2 subfamily.

Its subcellular location is the cell membrane. Required for the insertion and/or proper folding and/or complex formation of integral membrane proteins into the membrane. Involved in integration of membrane proteins that insert both dependently and independently of the Sec translocase complex, as well as at least some lipoproteins. In Halalkalibacterium halodurans (strain ATCC BAA-125 / DSM 18197 / FERM 7344 / JCM 9153 / C-125) (Bacillus halodurans), this protein is Membrane protein insertase YidC 1.